Reading from the N-terminus, the 256-residue chain is tRNA (guanine-N(1)-)-methyltransferase (256 aa).

S-adenosyl-L-methionine-binding positions include glycine 117 and 137-142; that span reads LGDFVL.

It belongs to the RNA methyltransferase TrmD family. Homodimer.

It is found in the cytoplasm. It catalyses the reaction guanosine(37) in tRNA + S-adenosyl-L-methionine = N(1)-methylguanosine(37) in tRNA + S-adenosyl-L-homocysteine + H(+). In terms of biological role, specifically methylates guanosine-37 in various tRNAs. This Methylibium petroleiphilum (strain ATCC BAA-1232 / LMG 22953 / PM1) protein is tRNA (guanine-N(1)-)-methyltransferase.